A 722-amino-acid chain; its full sequence is NCK-interacting protein with SH3 domain (722 aa).

The 58-residue stretch at 1–58 (MYRALYAFRSAEPNALAFAAGETFLVLERSSAHWWLAARARSGETGYVPPAYLRRLQG) folds into the SH3 domain. Disordered regions lie at residues 101 to 122 (KETL…SSTS) and 149 to 286 (PSSE…ASDD). Positions 110–121 (SASSVAVMTSST) are enriched in low complexity. Ser120 carries the post-translational modification Phosphoserine. Residues 169 to 185 (QIPPQPRRAAPTTPPPP) are compositionally biased toward pro residues. A Nuclear localization signal motif is present at residues 175-192 (RRAAPTTPPPPVKRRDRE). At Thr181 the chain carries Phosphothreonine. Positions 206–240 (PSGGNSVSSGSSVSSTSLDTLYTSSSPSEPGSSCS) are enriched in low complexity. Position 294 is a phosphoserine (Ser294).

As to quaternary structure, associates with the intermediate filaments, vimentin and desmin. Binds the first and third SH3 domains of NCK. Binds the proline-rich domains of N-WASP through its SH3 domain. Similarly, binds diaphanous protein homolog 1 (DRF1). Binds the SH3 domains of GRB2 through its proline-rich domains. Interacts with Helicobacter pylori toxin vacA. Isoform 4 interacts with FHOD1. Interacts with FASLG. Interacts with TMIGD2. As to expression, highest expression in heart, brain, skeletal muscle, kidney and liver. Lower levels in placenta, lung, small intestine and leukocytes. Weak expression in colon, thymus and spleen.

It localises to the nucleus. In terms of biological role, has an important role in stress fiber formation induced by active diaphanous protein homolog 1 (DRF1). Induces microspike formation, in vivo. In vitro, stimulates N-WASP-induced ARP2/3 complex activation in the absence of CDC42. May play an important role in the maintenance of sarcomeres and/or in the assembly of myofibrils into sarcomeres. Implicated in regulation of actin polymerization and cell adhesion. Plays a role in angiogenesis. This is NCK-interacting protein with SH3 domain (NCKIPSD) from Homo sapiens (Human).